The following is a 343-amino-acid chain: Oxygen-dependent coproporphyrinogen-III oxidase (343 aa).

Residue S99 participates in substrate binding. Residues H103 and H113 each coordinate a divalent metal cation. The active-site Proton donor is the H113. Position 115 to 117 (115 to 117 (NYR)) interacts with substrate. 2 residues coordinate a divalent metal cation: H147 and H177. Residues 267–302 (YVEFNLVWDRGTIFGLQTNGRTESILMSLPPLARWE) form an important for dimerization region.

This sequence belongs to the aerobic coproporphyrinogen-III oxidase family. In terms of assembly, homodimer. Requires a divalent metal cation as cofactor.

It localises to the cytoplasm. The enzyme catalyses coproporphyrinogen III + O2 + 2 H(+) = protoporphyrinogen IX + 2 CO2 + 2 H2O. It participates in porphyrin-containing compound metabolism; protoporphyrin-IX biosynthesis; protoporphyrinogen-IX from coproporphyrinogen-III (O2 route): step 1/1. Involved in the heme and chlorophyll biosynthesis. Catalyzes the aerobic oxidative decarboxylation of propionate groups of rings A and B of coproporphyrinogen-III to yield the vinyl groups in protoporphyrinogen-IX. The sequence is that of Oxygen-dependent coproporphyrinogen-III oxidase from Prochlorococcus marinus (strain SARG / CCMP1375 / SS120).